Here is a 526-residue protein sequence, read N- to C-terminus: Probable Xaa-Pro aminopeptidase MGG_05684 (526 aa).

Mn(2+) is bound by residues Asp-285, Asp-296, Glu-447, and Glu-488.

This sequence belongs to the peptidase M24B family. Requires Mn(2+) as cofactor.

It carries out the reaction Release of any N-terminal amino acid, including proline, that is linked to proline, even from a dipeptide or tripeptide.. Its function is as follows. Catalyzes the removal of a penultimate prolyl residue from the N-termini of peptides. The chain is Probable Xaa-Pro aminopeptidase MGG_05684 from Pyricularia oryzae (strain 70-15 / ATCC MYA-4617 / FGSC 8958) (Rice blast fungus).